We begin with the raw amino-acid sequence, 385 residues long: Putative RNA methyltransferase YpsC (385 aa).

The THUMP domain occupies 44 to 156 (AICRANLWLR…KDQALITLDS (113 aa)).

It belongs to the methyltransferase superfamily. In terms of assembly, interacts with the RNA polymerase core.

This is Putative RNA methyltransferase YpsC (ypsC) from Bacillus subtilis (strain 168).